We begin with the raw amino-acid sequence, 141 residues long: Large ribosomal subunit protein uL11 (141 aa).

This sequence belongs to the universal ribosomal protein uL11 family. Part of the ribosomal stalk of the 50S ribosomal subunit. Interacts with L10 and the large rRNA to form the base of the stalk. L10 forms an elongated spine to which L12 dimers bind in a sequential fashion forming a multimeric L10(L12)X complex. Post-translationally, one or more lysine residues are methylated.

In terms of biological role, forms part of the ribosomal stalk which helps the ribosome interact with GTP-bound translation factors. The protein is Large ribosomal subunit protein uL11 of Clostridium perfringens (strain ATCC 13124 / DSM 756 / JCM 1290 / NCIMB 6125 / NCTC 8237 / Type A).